A 1313-amino-acid chain; its full sequence is MRSAAAAPRSPAVATESRRFAAARWPGWRSLQRPARRSGRGGGGAAPGPYPSAAPPPPGPGPPPSRQSSPPSASDCFGSNGNGGGAFRPGSRRLLGLGGPPRPFVVLLLPLASPGAPPAAPTRASPLGARASPPRSGVSLARPAPGCPRPACEPVYGPLTMSLKPQQQQQQQQQQQQQQQQQQQQQQQPPPAAANVRKPGGSGLLASPAAAPSPSSSSVSSSSATAPSSVVAATSGGGRPGLGRGRNSNKGLPQSTISFDGIYANMRMVHILTSVVGSKCEVQVKNGGIYEGVFKTYSPKCDLVLDAAHEKSTESSSGPKREEIMESILFKCSDFVVVQFKDMDSSYAKRDAFTDSAISAKVNGEHKEKDLEPWDAGELTANEELEALENDVSNGWDPNDMFRYNEENYGVVSTYDSSLSSYTVPLERDNSEEFLKREARANQLAEEIESSAQYKARVALENDDRSEEEKYTAVQRNSSEREGHSINTRENKYIPPGQRNREVISWGSGRQNSPRMGQPGSGSMPSRSTSHTSDFNPNSGSDQRVVNGGVPWPSPCPSPSSRPPSRYQSGPNSLPPRAATPTRPPSRPPSRPSRPPSHPSAHGSPAPVSTMPKRMSSEGPPRMSPKAQRHPRNHRVSAGRGSISSGLEFVSHNPPSEAATPPVARTSPSGGTWSSVVSGVPRLSPKTHRPRSPRQNSIGNTPSGPVLASPQAGIIPTEAVAMPIPAASPTPASPASNRAVTPSSEAKDSRLQDQRQNSPAGNKENIKPNETSPSFSKAENKGISPVVSEHRKQIDDLKKFKNDFRLQPSSTSESMDQLLNKNREGEKSRDLIKDKIEPSAKDSFIENSSSNCTSGSSKPNSPSISPSILSNTEHKRGPEVTSQGVQTSSPACKQEKDDKEEKKDAAEQVRKSTLNPNAKEFNPRSFSQPKPSTTPTSPRPQAQPSPSMVGHQQPTPVYTQPVCFAPNMMYPVPVSPGVQPLYPIPMTPMPVNQAKTYRAVPNMPQQRQDQHHQSAMMHPASAAGPPIAATPPAYSTQYVAYSPQQFPNQPLVQHVPHYQSQHPHVYSPVIQGNARMMAPPTHAQPGLVSSSATQYGAHEQTHAMYACPKLPYNKETSPSFYFAISTGSLAQQYAHPNATLHPHTPHPQPSATPTGQQQSQHGGSHPAPSPVQHHQHQAAQALHLASPQQQSAIYHAGLAPTPPSMTPASNTQSPQNSFPAAQQTVFTIHPSHVQPAYTNPPHMAHVPQAHVQSGMVPSHPTAHAPMMLMTTQPPGGPQAALAQSALQPIPVSTTAHFPYMTHPSVQAHHQQQL.

A compositionally biased stretch (low complexity) spans 1–12 (MRSAAAAPRSPA). The interval 1 to 255 (MRSAAAAPRS…RNSNKGLPQS (255 aa)) is disordered. Residues 48–65 (GPYPSAAPPPPGPGPPPS) show a composition bias toward pro residues. Low complexity-rich tracts occupy residues 104-114 (FVVLLLPLASP), 141-154 (ARPA…ACEP), 166-187 (QQQQ…QQQQ), and 204-234 (LLAS…VAAT). The segment covering 235 to 244 (SGGGRPGLGR) has biased composition (gly residues). S248 is subject to Phosphoserine. One can recognise a Sm domain in the interval 267–344 (RMVHILTSVV…FVVVQFKDMD (78 aa)). Phosphoserine occurs at positions 393, 466, 478, 508, and 554. Composition is skewed to basic and acidic residues over residues 459–471 (ALEN…EEKY) and 478–492 (SSER…RENK). Disordered regions lie at residues 459-954 (ALEN…HQQP) and 1137-1219 (NATL…NSFP). Residues 508–544 (SGRQNSPRMGQPGSGSMPSRSTSHTSDFNPNSGSDQR) show a composition bias toward polar residues. Pro residues predominate over residues 552-562 (WPSPCPSPSSR). A compositionally biased stretch (low complexity) spans 563–581 (PPSRYQSGPNSLPPRAATP). Residues 582-598 (TRPPSRPPSRPSRPPSH) are compositionally biased toward pro residues. S624 is modified (phosphoserine). Positions 627–637 (AQRHPRNHRVS) are enriched in basic residues. At R640 the chain carries Asymmetric dimethylarginine; alternate. R640 is subject to Omega-N-methylarginine; alternate. S642 bears the Phosphoserine mark. Over residues 666–681 (TSPSGGTWSSVVSGVP) the composition is skewed to low complexity. Residue S684 is modified to Phosphoserine. Polar residues predominate over residues 693 to 703 (PRQNSIGNTPS). S728 is modified (phosphoserine). The residue at position 741 (T741) is a Phosphothreonine. The segment covering 768-777 (PNETSPSFSK) has biased composition (polar residues). 2 positions are modified to phosphoserine: S772 and S784. A compositionally biased stretch (basic and acidic residues) spans 788–804 (SEHRKQIDDLKKFKNDF). Positions 807-820 (QPSSTSESMDQLLN) are enriched in polar residues. Residues 821 to 844 (KNREGEKSRDLIKDKIEPSAKDSF) show a composition bias toward basic and acidic residues. The span at 847–871 (NSSSNCTSGSSKPNSPSISPSILSN) shows a compositional bias: low complexity. Phosphoserine is present on residues S856, S857, S861, S865, S867, S888, and S889. The segment covering 880-891 (VTSQGVQTSSPA) has biased composition (polar residues). K893 participates in a covalent cross-link: Glycyl lysine isopeptide (Lys-Gly) (interchain with G-Cter in SUMO2). Over residues 893-910 (KQEKDDKEEKKDAAEQVR) the composition is skewed to basic and acidic residues. Low complexity-rich tracts occupy residues 925 to 936 (SFSQPKPSTTPT) and 1155 to 1192 (GQQQ…QQSA). Residues 1206-1219 (TPASNTQSPQNSFP) are compositionally biased toward polar residues.

It belongs to the ataxin-2 family. Monomer. Can also form homodimers. Interacts with TARDBP; the interaction is RNA-dependent. Interacts with RBFOX1. Interacts with polyribosomes. Interacts with SH3GL2 and SH3GL3. Interacts with SH3KBP1 and CBL. Interacts with EGFR. Interacts with ATXN2L. Expressed in the brain, heart, liver, skeletal muscle, pancreas and placenta. Isoform 1 is predominant in the brain and spinal cord. Isoform 4 is more abundant in the cerebellum. In the brain, broadly expressed in the amygdala, caudate nucleus, corpus callosum, hippocampus, hypothalamus, substantia nigra, subthalamic nucleus and thalamus.

It is found in the cytoplasm. Involved in EGFR trafficking, acting as negative regulator of endocytic EGFR internalization at the plasma membrane. The sequence is that of Ataxin-2 (ATXN2) from Homo sapiens (Human).